The following is a 919-amino-acid chain: Probable dipeptidyl-aminopeptidase B (919 aa).

The interval 1-89 (MGANSRVNDD…DGYVPSGGKP (89 aa)) is disordered. Topologically, residues 1–95 (MGANSRVNDD…GGKPAQRRTR (95 aa)) are cytoplasmic. Positions 27 to 38 (DSSSTASISLTL) are enriched in low complexity. Positions 44–55 (HTATEPSKSTNG) are enriched in polar residues. Residues 96–116 (IVFWLLVALCVGGWAMAFIIM) form a helical; Signal-anchor for type II membrane protein membrane-spanning segment. Residues 117-919 (ATSPNNRHST…RVIRRLLHFG (803 aa)) lie on the Vacuolar side of the membrane. A disordered region spans residues 121-150 (NNRHSTSDSSSGGSESEIVKPNTPHDGKKI). Residues 127–136 (SDSSSGGSES) show a composition bias toward low complexity. Residues Asn207, Asn303, Asn355, Asn577, and Asn665 are each glycosylated (N-linked (GlcNAc...) asparagine). The Charge relay system role is filled by Ser760. Asn814 and Asn819 each carry an N-linked (GlcNAc...) asparagine glycan. Catalysis depends on charge relay system residues Asp837 and His870.

It belongs to the peptidase S9B family.

The protein resides in the vacuole membrane. It carries out the reaction Release of an N-terminal dipeptide, Xaa-Yaa-|-Zaa-, from a polypeptide, preferentially when Yaa is Pro, provided Zaa is neither Pro nor hydroxyproline.. Type IV dipeptidyl-peptidase which removes N-terminal dipeptides sequentially from polypeptides having unsubstituted N-termini provided that the penultimate residue is proline. This chain is Probable dipeptidyl-aminopeptidase B (DAPB), found in Arthroderma otae (strain ATCC MYA-4605 / CBS 113480) (Microsporum canis).